Reading from the N-terminus, the 723-residue chain is Methionine--tRNA ligase (723 aa).

Residues 11-21 (PYANGPIHAGH) carry the 'HIGH' region motif. Cys143, Cys146, Cys156, and Cys159 together coordinate Zn(2+). A 'KMSKS' region motif is present at residues 344–348 (KFSTS). Thr347 contributes to the ATP binding site. One can recognise a tRNA-binding domain in the interval 623–723 (DFAKLDLRVG…KEVKLGAKVR (101 aa)).

The protein belongs to the class-I aminoacyl-tRNA synthetase family. MetG type 1 subfamily. Homodimer. It depends on Zn(2+) as a cofactor.

It localises to the cytoplasm. The enzyme catalyses tRNA(Met) + L-methionine + ATP = L-methionyl-tRNA(Met) + AMP + diphosphate. Its function is as follows. Is required not only for elongation of protein synthesis but also for the initiation of all mRNA translation through initiator tRNA(fMet) aminoacylation. The polypeptide is Methionine--tRNA ligase (Pyrococcus horikoshii (strain ATCC 700860 / DSM 12428 / JCM 9974 / NBRC 100139 / OT-3)).